Here is a 122-residue protein sequence, read N- to C-terminus: Elsinochromes biosynthesis cluster protein HP4 (122 aa).

Functionally, part of the gene cluster that mediates the biosynthesis of elsinochromes, pigments consisting of at least four interconvertible tautomers (A, B, C and D) that have a core phenolic quinone to which various side chains are attached and which play an important role in fungal pathogenesis. The non-reducing polyketide synthase PKS1 was proposed to iteratively catalyze decarboxylation between acetyl-CoA and malonyl-CoA subunits for polyketide chain elongation. The released polyketide undergoes cyclization to form an aromatic ring, and proceeds via serial modification steps to produce the heptaketide back- bone of elsinochrome. As elsinochrome has a symmetrical structure, two identical heptaketides are fused to form a core 1,2-dihydrobenzo-perylene ring structure, which can then be successively modified to produce the various derivatives of elsinochrome. Some of these reactions may be cooperatively carried out, at least in part, by the products of RDT1, OXR1 and PKS1. PRF1, embedded within the elsinochrome cluster possibly functions to stabilize some of the biosynthetic enzymes required for elsinochrome production. As prefoldin is a hexamer containing 2 a and 4 b subunits, additional prefoldin subunits, whose coding genes may not immediately link to the elsinochrome biosynthetic gene cluster, are required to fulfill the chaperone function. In addition, no methyltransferase-coding gene exists within the biosynthetic gene cluster, even though elsinochrome has four methyl groups at positions C3, C7, C8 and C12. Apparently, the identified gene cluster does not contain the entire entourage of genes responsible for elsinochrome biosynthesis. Once elsinochrome is synthesized, it must be exported outside the fungal cells, which is probably accomplished by the ECT1 transporter, to avoid toxicity. The sequence is that of Elsinochromes biosynthesis cluster protein HP4 from Elsinoe fawcettii (Citrus scab fungus).